Reading from the N-terminus, the 239-residue chain is MAGHSKWANIQHRKGRQDEKRGKIWTRIIREITVAARAGGGDVSANPRLRLAIDKAKAANMPADRIKYNIDKATGNAEGLTYEEIRYEGYGIGGAAIIVDTMTDNRVRTVAEVRHAFSKYGGNMGTEGSVAFQFKHVGQLIFAPGTSEDKVMEVALEAGAEDVVTDEDGAIEVLTAPGDFEAVKNALEAAGLTPDAADVTMRPDVTIDLAGEDAERMQKLLDVIEDLDDVQEVYHNAAL.

The segment at 1 to 20 (MAGHSKWANIQHRKGRQDEK) is disordered.

Belongs to the TACO1 family.

It localises to the cytoplasm. This chain is Probable transcriptional regulatory protein Aave_3203, found in Paracidovorax citrulli (strain AAC00-1) (Acidovorax citrulli).